Here is a 291-residue protein sequence, read N- to C-terminus: MSITIFNRDLKEIYYEKQYKNGQLKFLYNTILGRMLLKLFISTRLFSKINAIFNNNKGSIKKIEPFINEYKIDMSEYEKKEYTSFDDFFTRKILEGKRSFSKEKSHLISPADSKLMVYEIDDDLKMNIKNSIYTVGELLNDEKLSREYKNGTCLIFRLTVDDYHRYCFIDDGSLKYRKVINGRLHTVGPISSKRYKVYSENNREYSVLKTRNFGKVIQIEVGALLVGKIKNHSIKVFKKGDEKGYFCFGGSTIVLLFKEKVIKMDEDILEYSKAGIETKIKMGEKIGETND.

Active-site charge relay system; for autoendoproteolytic cleavage activity residues include Asp-112 and Ser-251. Ser-251 (schiff-base intermediate with substrate; via pyruvic acid; for decarboxylase activity) is an active-site residue. Position 251 is a pyruvic acid (Ser); by autocatalysis (Ser-251).

Belongs to the phosphatidylserine decarboxylase family. PSD-B subfamily. Prokaryotic type II sub-subfamily. Heterodimer of a large membrane-associated beta subunit and a small pyruvoyl-containing alpha subunit. Pyruvate is required as a cofactor. Post-translationally, is synthesized initially as an inactive proenzyme. Formation of the active enzyme involves a self-maturation process in which the active site pyruvoyl group is generated from an internal serine residue via an autocatalytic post-translational modification. Two non-identical subunits are generated from the proenzyme in this reaction, and the pyruvate is formed at the N-terminus of the alpha chain, which is derived from the carboxyl end of the proenzyme. The autoendoproteolytic cleavage occurs by a canonical serine protease mechanism, in which the side chain hydroxyl group of the serine supplies its oxygen atom to form the C-terminus of the beta chain, while the remainder of the serine residue undergoes an oxidative deamination to produce ammonia and the pyruvoyl prosthetic group on the alpha chain. During this reaction, the Ser that is part of the protease active site of the proenzyme becomes the pyruvoyl prosthetic group, which constitutes an essential element of the active site of the mature decarboxylase.

The protein localises to the cell membrane. It carries out the reaction a 1,2-diacyl-sn-glycero-3-phospho-L-serine + H(+) = a 1,2-diacyl-sn-glycero-3-phosphoethanolamine + CO2. The protein operates within phospholipid metabolism; phosphatidylethanolamine biosynthesis; phosphatidylethanolamine from CDP-diacylglycerol: step 2/2. In terms of biological role, catalyzes the formation of phosphatidylethanolamine (PtdEtn) from phosphatidylserine (PtdSer). In Clostridium acetobutylicum (strain ATCC 824 / DSM 792 / JCM 1419 / IAM 19013 / LMG 5710 / NBRC 13948 / NRRL B-527 / VKM B-1787 / 2291 / W), this protein is Phosphatidylserine decarboxylase proenzyme 2.